We begin with the raw amino-acid sequence, 371 residues long: Chaperone protein DnaJ (371 aa).

A J domain is found at 5-69; the sequence is DYYEVLGLSK…QKRAQYDQFG (65 aa). The segment at 133 to 215 adopts a CR-type zinc-finger fold; the sequence is GKELNVEIPV…CHGSSKVRKR (83 aa). Residues C146, C149, C163, C166, C189, C192, C203, and C206 each coordinate Zn(2+). CXXCXGXG motif repeat units lie at residues 146-153, 163-170, 189-196, and 203-210; these read CDTCKGSG, CKHCSGSG, CGHCSGTG, and CTTCHGSS.

This sequence belongs to the DnaJ family. In terms of assembly, homodimer. Zn(2+) is required as a cofactor.

It localises to the cytoplasm. In terms of biological role, participates actively in the response to hyperosmotic and heat shock by preventing the aggregation of stress-denatured proteins and by disaggregating proteins, also in an autonomous, DnaK-independent fashion. Unfolded proteins bind initially to DnaJ; upon interaction with the DnaJ-bound protein, DnaK hydrolyzes its bound ATP, resulting in the formation of a stable complex. GrpE releases ADP from DnaK; ATP binding to DnaK triggers the release of the substrate protein, thus completing the reaction cycle. Several rounds of ATP-dependent interactions between DnaJ, DnaK and GrpE are required for fully efficient folding. Also involved, together with DnaK and GrpE, in the DNA replication of plasmids through activation of initiation proteins. This Bacillus cereus (strain ATCC 14579 / DSM 31 / CCUG 7414 / JCM 2152 / NBRC 15305 / NCIMB 9373 / NCTC 2599 / NRRL B-3711) protein is Chaperone protein DnaJ.